The following is a 410-amino-acid chain: MTITKQTGQVTAVADGTVVTPEGFQAAGVNAGLRYSKNDLGVILCDVPASAAAVYTQSHFQAAPLKVTQASLAVEQKLQAVIVNRPCANACTGAQGLKDAYEMRELCAKQFGLALHHVAVASTGVIGEYLPMEKIRAGIKQLVPGVTMADAEAFQTAILTTDTVMKRACYQTTIDGKTVTVGGAAKGSGMIHPNMATMLAFITTDANVSSPVLHAALRSITDVSFNQITVDGDTSTNDMVVVMASGLAGNDELTPDHPDWENFYEALRKTCEDLAKQIAKDGEGATKLIEVRVRGAKTDEEAKKIAKQIVGSNLVKTAVYGADANWGRIIGAIGYSDAEVNPDNVDVAIGPMVMLKGSEPQPFSEEEAAAYLQQETVVIEVDLHIGDGVGVAWGCDLTYDYVKINASYRT.

Substrate-binding residues include Thr-160, Lys-186, Thr-197, Glu-283, Asn-405, and Thr-410. The Nucleophile role is filled by Thr-197.

It belongs to the ArgJ family. In terms of assembly, heterotetramer of two alpha and two beta chains.

The protein localises to the cytoplasm. It carries out the reaction N(2)-acetyl-L-ornithine + L-glutamate = N-acetyl-L-glutamate + L-ornithine. The catalysed reaction is L-glutamate + acetyl-CoA = N-acetyl-L-glutamate + CoA + H(+). It participates in amino-acid biosynthesis; L-arginine biosynthesis; L-ornithine and N-acetyl-L-glutamate from L-glutamate and N(2)-acetyl-L-ornithine (cyclic): step 1/1. It functions in the pathway amino-acid biosynthesis; L-arginine biosynthesis; N(2)-acetyl-L-ornithine from L-glutamate: step 1/4. Its activity is regulated as follows. Competitively inhibited by L-ornithine. In terms of biological role, catalyzes two activities which are involved in the cyclic version of arginine biosynthesis: the synthesis of N-acetylglutamate from glutamate and acetyl-CoA as the acetyl donor, and of ornithine by transacetylation between N(2)-acetylornithine and glutamate. This Geobacillus stearothermophilus (Bacillus stearothermophilus) protein is Arginine biosynthesis bifunctional protein ArgJ.